A 654-amino-acid polypeptide reads, in one-letter code: Meiotically up-regulated gene 24 protein (654 aa).

The RRM 1 domain occupies 299 to 355; it reads RNVFIGNLPSSYHEKEIEEAFGKFGKIEHIKILSKKNIAFVHFLNIRDAIKVVRTLS. Residues 383 to 404 form a disordered region; it reads SCFTSKQNPDTTSDRCRQQESK. The segment covering 384 to 393 has biased composition (polar residues); that stretch reads CFTSKQNPDT. A compositionally biased stretch (basic and acidic residues) spans 394-404; it reads TSDRCRQQESK. 2 consecutive RRM domains span residues 409-482 and 500-571; these read RTVF…WGKE and RNVY…YAPD.

The protein resides in the cytoplasm. In terms of biological role, has a role in meiosis. The protein is Meiotically up-regulated gene 24 protein (mug24) of Schizosaccharomyces pombe (strain 972 / ATCC 24843) (Fission yeast).